Here is a 389-residue protein sequence, read N- to C-terminus: 5-hydroxytryptamine receptor 1B (389 aa).

The interval 1–27 (MEAAGAPCAPPPPAGSQTGAPPANLSS) is disordered. At 1-45 (MEAAGAPCAPPPPAGSQTGAPPANLSSAPHNCSAEGYIYQDSVAL) the chain is on the extracellular side. The segment covering 16-27 (SQTGAPPANLSS) has biased composition (polar residues). 2 N-linked (GlcNAc...) asparagine glycosylation sites follow: N24 and N31. The chain crosses the membrane as a helical span at residues 46 to 71 (PWKVLLVILLALITLATTLSNAFVIA). The Cytoplasmic segment spans residues 72–85 (TVYRTRKLHTPANY). A helical transmembrane segment spans residues 86–110 (LIASLAVTDLLVSILVMPISTMYTV). Topologically, residues 111–118 (TGRWTLGQ) are extracellular. The chain crosses the membrane as a helical span at residues 119-144 (VVCDLWLSSDITCCTASILHLCVIAL). Cysteines 121 and 198 form a disulfide. The ergotamine site is built by D128 and T133. The DRY motif; important for ligand-induced conformation changes and signaling motif lies at 145–147 (DRY). The Cytoplasmic segment spans residues 145–164 (DRYWAITDAVEYSAKRTPKR). Residues 165–183 (AAVMIALVWVFSISISLPP) traverse the membrane as a helical segment. The Extracellular portion of the chain corresponds to 184–204 (FFWRQAKAEEEVSDCVVNTDH). V200 contacts ergotamine. The helical transmembrane segment at 205–228 (ILYTVYSTVGAFYFPTLLLIALYG) threads the bilayer. The Cytoplasmic portion of the chain corresponds to 229–314 (RIYVEARSRI…AARERKATKT (86 aa)). Polar residues predominate over residues 258 to 271 (DSPGSTSSVTSVNS). Residues 258–281 (DSPGSTSSVTSVNSRAPDVPSESG) are disordered. The chain crosses the membrane as a helical span at residues 315–336 (LGIILGAFIVCWLPFFIISLVM). Topologically, residues 337–346 (PICKDACWFH) are extracellular. The chain crosses the membrane as a helical span at residues 347–369 (LAIFDFFTWLGYLNSLINPIIYT). Residues 364 to 368 (NPIIY) carry the NPxxY motif; important for ligand-induced conformation changes and signaling motif. The Cytoplasmic portion of the chain corresponds to 370-389 (MSNEDFKQAFHKLIRFKCAG). C387 carries S-palmitoyl cysteine lipidation.

The protein belongs to the G-protein coupled receptor 1 family. As to quaternary structure, homodimer. Heterodimer with HTR1D. Phosphorylated. Desensitization of the receptor may be mediated by its phosphorylation. In terms of processing, palmitoylated.

It is found in the cell membrane. Functionally, G-protein coupled receptor for 5-hydroxytryptamine (serotonin). Also functions as a receptor for ergot alkaloid derivatives, various anxiolytic and antidepressant drugs and other psychoactive substances, such as lysergic acid diethylamide (LSD). Ligand binding causes a conformation change that triggers signaling via guanine nucleotide-binding proteins (G proteins) and modulates the activity of downstream effectors, such as adenylate cyclase. HTR1B is coupled to G(i)/G(o) G alpha proteins and mediates inhibitory neurotransmission by inhibiting adenylate cyclase activity. Arrestin family members inhibit signaling via G proteins and mediate activation of alternative signaling pathways. Regulates the release of 5-hydroxytryptamine, dopamine and acetylcholine in the brain, and thereby affects neural activity, nociceptive processing, pain perception, mood and behavior. Besides, plays a role in vasoconstriction of cerebral arteries. The sequence is that of 5-hydroxytryptamine receptor 1B (HTR1B) from Canis lupus familiaris (Dog).